The chain runs to 285 residues: Sulfotransferase 2A2 (285 aa).

3'-phosphoadenylyl sulfate is bound by residues Lys-44, Ser-45, Gly-46, Thr-47, Asn-48, and Trp-49. Catalysis depends on His-99, which acts as the Proton acceptor. 8 residues coordinate 3'-phosphoadenylyl sulfate: Arg-121, Ser-129, Tyr-184, Ser-218, Met-223, Arg-247, Lys-248, and Gly-249.

Belongs to the sulfotransferase 1 family.

It is found in the cytoplasm. The catalysed reaction is an alcohol + 3'-phosphoadenylyl sulfate = an alkyl sulfate + adenosine 3',5'-bisphosphate + H(+). Functionally, sulfotransferase that utilizes 3'-phospho-5'-adenylyl sulfate (PAPS) as sulfonate donor to catalyze the sulfate conjugation of a potential wide variety of acceptor molecules bearing a hydroxyl group. Sulfonation increases the water solubility of most compounds, and therefore their renal excretion, but it can also result in bioactivation to form active metabolites. The sequence is that of Sulfotransferase 2A2 from Mus musculus (Mouse).